Here is a 401-residue protein sequence, read N- to C-terminus: Multidrug resistance protein MdtH (401 aa).

A run of 11 helical transmembrane segments spans residues 13-33 (YFLL…FPLI), 34-54 (SIRF…ALGL), 99-116 (PWIL…GTLF), 139-159 (LLMM…SWLL), 165-185 (FVCW…AWLL), 214-234 (VLTL…LPIV), 243-263 (AAVK…LYPL), 277-297 (LMAG…ITHL), 299-319 (TLFM…PARE), 340-360 (LGLA…YDTG), and 368-388 (LPWF…YWQF).

Belongs to the major facilitator superfamily. DHA1 family. MdtH (TC 2.A.1.2.21) subfamily.

The protein resides in the cell inner membrane. This Yersinia pseudotuberculosis serotype O:1b (strain IP 31758) protein is Multidrug resistance protein MdtH.